The chain runs to 207 residues: Small ribosomal subunit protein uS4 (207 aa).

The S4 RNA-binding domain occupies 96 to 156 (SRLDNVVYRM…KKSHNQSRIY (61 aa)).

The protein belongs to the universal ribosomal protein uS4 family. Part of the 30S ribosomal subunit. Contacts protein S5. The interaction surface between S4 and S5 is involved in control of translational fidelity.

In terms of biological role, one of the primary rRNA binding proteins, it binds directly to 16S rRNA where it nucleates assembly of the body of the 30S subunit. With S5 and S12 plays an important role in translational accuracy. This Blochmanniella floridana protein is Small ribosomal subunit protein uS4.